The sequence spans 132 residues: uncharacterized protein (132 aa).

Positions Trp-68 to Ser-91 are disordered.

This is an uncharacterized protein from Streptomyces cacaoi.